The primary structure comprises 66 residues: Toxin Boma6a (66 aa).

An LCN-type CS-alpha/beta domain is found at 2-64 (RDAYIAQNYN…VPIKVEGKCH (63 aa)). Disulfide bonds link C12-C63, C16-C36, C22-C46, and C26-C48.

It belongs to the long (4 C-C) scorpion toxin superfamily. Sodium channel inhibitor family. Alpha subfamily. As to expression, expressed by the venom gland.

The protein resides in the secreted. Its function is as follows. Alpha toxins bind voltage-independently at site-3 of sodium channels (Nav) and inhibit the inactivation of the activated channels, thereby blocking neuronal transmission. In Buthus occitanus mardochei (Moroccan scorpion), this protein is Toxin Boma6a.